The primary structure comprises 383 residues: MAINLFTSESVSEGHPDKIADQISDAVLDEILKQDPKARVACETYVKTGMALVGGEITTSAWVDIENLTRQVICDIGYTHSDMGFDAHSCAVLNAIGKQSPDINQGVDRADPLEQGAGDQGIMFGYATNETEVLMPAPITYAHRLMEQQAKVRKSGKLDWLRPDAKSQLTFAYENNKIVGIDAVVLSTQHAEHVSQKDLVEGVMEEIIKPVLPSEWLSQNTKYFINPTGRFVIGGPMGDCGLTGRKIIVDTYGGAARHGGGAFSGKDPSKVDRSAAYAARYVAKNIVAAGLADRCEIQLSYAIGVADPTSIMVETFGTGKVSNETLVKLIYQNFDLRPYGLIKMLDLIRPIYRETAAYGHFGREHFPWEQTDKAEALRAGAGL.

H15 serves as a coordination point for ATP. Residue D17 coordinates Mg(2+). E43 provides a ligand contact to K(+). Residues E56 and Q99 each contribute to the L-methionine site. Residues 99 to 109 form a flexible loop region; the sequence is QSPDINQGVDR. Residues 164-166, 230-231, D239, 245-246, A262, and K266 contribute to the ATP site; these read DAK, RF, and RK. D239 is a binding site for L-methionine. K270 serves as a coordination point for L-methionine.

The protein belongs to the AdoMet synthase family. Homotetramer; dimer of dimers. It depends on Mg(2+) as a cofactor. K(+) is required as a cofactor.

The protein resides in the cytoplasm. The catalysed reaction is L-methionine + ATP + H2O = S-adenosyl-L-methionine + phosphate + diphosphate. Its pathway is amino-acid biosynthesis; S-adenosyl-L-methionine biosynthesis; S-adenosyl-L-methionine from L-methionine: step 1/1. In terms of biological role, catalyzes the formation of S-adenosylmethionine (AdoMet) from methionine and ATP. The overall synthetic reaction is composed of two sequential steps, AdoMet formation and the subsequent tripolyphosphate hydrolysis which occurs prior to release of AdoMet from the enzyme. The chain is S-adenosylmethionine synthase from Actinobacillus pleuropneumoniae serotype 7 (strain AP76).